The following is a 221-amino-acid chain: RNA pyrophosphohydrolase (221 aa).

A Nudix hydrolase domain is found at 6 to 149; the sequence is GFRPNVGIVL…KRSVYALALT (144 aa). Residues 38 to 59 carry the Nudix box motif; it reads GGIDRGETPEQAMFRELHEEVG.

Belongs to the Nudix hydrolase family. RppH subfamily. A divalent metal cation serves as cofactor.

Functionally, accelerates the degradation of transcripts by removing pyrophosphate from the 5'-end of triphosphorylated RNA, leading to a more labile monophosphorylated state that can stimulate subsequent ribonuclease cleavage. The polypeptide is RNA pyrophosphohydrolase (Verminephrobacter eiseniae (strain EF01-2)).